The chain runs to 275 residues: MRIALGLQYDGSPYAGWQTQLHQPTIQDELEKALTAFIGEEAKAFPVHTITAGRTDTGVHALGQVVHFDTNVGREDFSWVRGVNTFLPKSIVVNWAKEVPEEFSARFSAYERTYIYALHAGPCRSPIVNARAGYLMLPPDQFLDVEAMKKSAECLIGEHDFSSFRSSECQSKTPVKTIYAIDIISQEPWVYFRIRGNAFLHHMIRNIVGCFLQIGQGRQQSGWMAEVLTAKNRQIAAPTFMADGLYLAKIKYPEEFAIPQPWLENAWLPTNVIGK.

Asp56 functions as the Nucleophile in the catalytic mechanism. Tyr114 contributes to the substrate binding site.

This sequence belongs to the tRNA pseudouridine synthase TruA family. Homodimer.

The enzyme catalyses uridine(38/39/40) in tRNA = pseudouridine(38/39/40) in tRNA. Formation of pseudouridine at positions 38, 39 and 40 in the anticodon stem and loop of transfer RNAs. The polypeptide is tRNA pseudouridine synthase A (Polynucleobacter asymbioticus (strain DSM 18221 / CIP 109841 / QLW-P1DMWA-1) (Polynucleobacter necessarius subsp. asymbioticus)).